The sequence spans 101 residues: Small ribosomal subunit protein uS14 (101 aa).

Positions 1–10 are enriched in basic and acidic residues; that stretch reads MAKKSSIEKN. The tract at residues 1–23 is disordered; sequence MAKKSSIEKNNRRKRMTGNAAAK.

Belongs to the universal ribosomal protein uS14 family. Part of the 30S ribosomal subunit. Contacts proteins S3 and S10.

Functionally, binds 16S rRNA, required for the assembly of 30S particles and may also be responsible for determining the conformation of the 16S rRNA at the A site. This chain is Small ribosomal subunit protein uS14, found in Nitrobacter hamburgensis (strain DSM 10229 / NCIMB 13809 / X14).